The following is an 88-amino-acid chain: Large ribosomal subunit protein bL31B (88 aa).

This sequence belongs to the bacterial ribosomal protein bL31 family. Type B subfamily. In terms of assembly, part of the 50S ribosomal subunit.

The sequence is that of Large ribosomal subunit protein bL31B from Bordetella bronchiseptica (strain ATCC BAA-588 / NCTC 13252 / RB50) (Alcaligenes bronchisepticus).